A 192-amino-acid chain; its full sequence is uncharacterized protein (192 aa).

Disordered stretches follow at residues 1-37 (MASS…PAFP) and 146-192 (ARGP…EQNK). 2 stretches are compositionally biased toward pro residues: residues 8–19 (TPSPAGLPPPSV) and 159–180 (APPP…PGWP).

This is an uncharacterized protein from Homo sapiens (Human).